The chain runs to 1399 residues: DNA-directed RNA polymerase subunit beta' (1399 aa).

Residues Cys70, Cys72, Cys85, and Cys88 each coordinate Zn(2+). Asp460, Asp462, and Asp464 together coordinate Mg(2+). Zn(2+) contacts are provided by Cys814, Cys888, Cys895, and Cys898.

This sequence belongs to the RNA polymerase beta' chain family. The RNAP catalytic core consists of 2 alpha, 1 beta, 1 beta' and 1 omega subunit. When a sigma factor is associated with the core the holoenzyme is formed, which can initiate transcription. It depends on Mg(2+) as a cofactor. Zn(2+) serves as cofactor.

It carries out the reaction RNA(n) + a ribonucleoside 5'-triphosphate = RNA(n+1) + diphosphate. Its function is as follows. DNA-dependent RNA polymerase catalyzes the transcription of DNA into RNA using the four ribonucleoside triphosphates as substrates. The sequence is that of DNA-directed RNA polymerase subunit beta' from Pseudomonas putida (strain W619).